A 298-amino-acid polypeptide reads, in one-letter code: Inosose dehydratase 2 (298 aa).

The protein belongs to the IolE/MocC family. Glutathione serves as cofactor. It depends on Co(2+) as a cofactor. Mn(2+) is required as a cofactor.

The enzyme catalyses scyllo-inosose = 3D-3,5/4-trihydroxycyclohexane-1,2-dione + H2O. The protein operates within polyol metabolism; myo-inositol degradation into acetyl-CoA; acetyl-CoA from myo-inositol: step 2/7. Functionally, catalyzes the dehydration of inosose (2-keto-myo-inositol, 2KMI or 2,4,6/3,5-pentahydroxycyclohexanone) to 3D-(3,5/4)-trihydroxycyclohexane-1,2-dione (D-2,3-diketo-4-deoxy-epi-inositol). The polypeptide is Inosose dehydratase 2 (Bacillus cereus (strain ZK / E33L)).